The primary structure comprises 130 residues: Small ribosomal subunit protein uS11c (130 aa).

This sequence belongs to the universal ribosomal protein uS11 family. In terms of assembly, part of the 30S ribosomal subunit.

The protein localises to the plastid. Its subcellular location is the cyanelle. The chain is Small ribosomal subunit protein uS11c from Cyanophora paradoxa.